The primary structure comprises 132 residues: NADPH-dependent 7-cyano-7-deazaguanine reductase (132 aa).

C34 acts as the Thioimide intermediate in catalysis. D41 acts as the Proton donor in catalysis. Substrate-binding positions include 56–58 (IEL) and 75–76 (HE).

The protein belongs to the GTP cyclohydrolase I family. QueF type 1 subfamily.

The protein localises to the cytoplasm. It catalyses the reaction 7-aminomethyl-7-carbaguanine + 2 NADP(+) = 7-cyano-7-deazaguanine + 2 NADPH + 3 H(+). Its pathway is tRNA modification; tRNA-queuosine biosynthesis. Functionally, catalyzes the NADPH-dependent reduction of 7-cyano-7-deazaguanine (preQ0) to 7-aminomethyl-7-deazaguanine (preQ1). This is NADPH-dependent 7-cyano-7-deazaguanine reductase from Vesicomyosocius okutanii subsp. Calyptogena okutanii (strain HA).